The chain runs to 77 residues: Acyl carrier protein (77 aa).

In terms of domain architecture, Carrier spans 1-76; that stretch reads MSLEDDVKAI…DVIKYIQEHQ (76 aa). S36 carries the post-translational modification O-(pantetheine 4'-phosphoryl)serine.

This sequence belongs to the acyl carrier protein (ACP) family. 4'-phosphopantetheine is transferred from CoA to a specific serine of apo-ACP by AcpS. This modification is essential for activity because fatty acids are bound in thioester linkage to the sulfhydryl of the prosthetic group.

It localises to the cytoplasm. It functions in the pathway lipid metabolism; fatty acid biosynthesis. Functionally, carrier of the growing fatty acid chain in fatty acid biosynthesis. The sequence is that of Acyl carrier protein from Chlamydia trachomatis serovar L2 (strain ATCC VR-902B / DSM 19102 / 434/Bu).